Here is a 199-residue protein sequence, read N- to C-terminus: Pyridoxine/pyridoxamine 5'-phosphate oxidase (199 aa).

FMN is bound by residues 45–50, 60–61, Arg66, Lys67, and Gln89; these read RVVLLK and FT. Lys50 contacts substrate. Substrate contacts are provided by Tyr107, Arg111, and Ser115. Residues 124-125 and Trp169 each bind FMN; that span reads QS. 175–177 contacts substrate; it reads RIH. An FMN-binding site is contributed by Arg179.

Belongs to the pyridoxamine 5'-phosphate oxidase family. As to quaternary structure, homodimer. FMN is required as a cofactor.

The catalysed reaction is pyridoxamine 5'-phosphate + O2 + H2O = pyridoxal 5'-phosphate + H2O2 + NH4(+). It catalyses the reaction pyridoxine 5'-phosphate + O2 = pyridoxal 5'-phosphate + H2O2. Its pathway is cofactor metabolism; pyridoxal 5'-phosphate salvage; pyridoxal 5'-phosphate from pyridoxamine 5'-phosphate: step 1/1. The protein operates within cofactor metabolism; pyridoxal 5'-phosphate salvage; pyridoxal 5'-phosphate from pyridoxine 5'-phosphate: step 1/1. In terms of biological role, catalyzes the oxidation of either pyridoxine 5'-phosphate (PNP) or pyridoxamine 5'-phosphate (PMP) into pyridoxal 5'-phosphate (PLP). The chain is Pyridoxine/pyridoxamine 5'-phosphate oxidase from Ehrlichia chaffeensis (strain ATCC CRL-10679 / Arkansas).